The chain runs to 472 residues: WD repeat-containing protein 88 (472 aa).

The tract at residues 1–22 (MASPPRCSPTAHDRECKLPPPS) is disordered. 7 WD repeats span residues 100–139 (GHEHAVSTCHFCVDDTKLLSGSYDCTVKLWDPVDGSVVRD), 143–182 (RPKAPVVECSITGDSSRVIAASYDKTVRAWDLETGKLLWK), 184–224 (RYDT…TVSV), 228–267 (HHTRSITSCCFDPDSQRVASVSLDRCIKIWDVTSQATLLT), 271–310 (AHSNAISNCCFTFSGHFLCTSSWDKNLKIWNVHTGEFRNC), 319–358 (GHEGSVSSCHFARDSSFLISGGFDRTVAIWDVAEGYRKLS), and 361–400 (GHNDWVMDVAISNNKKWILSASKDRTMRLWNIEEIDEIPL). Positions 447–472 (LPADTSSSSSSSERENSPPPRGSKDD) are disordered. Residues 458 to 472 (SERENSPPPRGSKDD) are compositionally biased toward basic and acidic residues.

In Homo sapiens (Human), this protein is WD repeat-containing protein 88 (WDR88).